An 854-amino-acid chain; its full sequence is uncharacterized protein (854 aa).

It belongs to the PEP-utilizing enzyme family.

This is an uncharacterized protein from Mycobacterium tuberculosis (strain CDC 1551 / Oshkosh).